Reading from the N-terminus, the 263-residue chain is Type III pantothenate kinase (263 aa).

9–16 (DIGNTNVK) provides a ligand contact to ATP. Residues tyrosine 103 and 110 to 113 (GADR) each bind substrate. The Proton acceptor role is filled by aspartate 112. Aspartate 134 contacts K(+). Threonine 137 contributes to the ATP binding site. Position 190 (threonine 190) interacts with substrate.

It belongs to the type III pantothenate kinase family. Homodimer. The cofactor is NH4(+). K(+) is required as a cofactor.

It localises to the cytoplasm. It catalyses the reaction (R)-pantothenate + ATP = (R)-4'-phosphopantothenate + ADP + H(+). It participates in cofactor biosynthesis; coenzyme A biosynthesis; CoA from (R)-pantothenate: step 1/5. Functionally, catalyzes the phosphorylation of pantothenate (Pan), the first step in CoA biosynthesis. The chain is Type III pantothenate kinase from Oleidesulfovibrio alaskensis (strain ATCC BAA-1058 / DSM 17464 / G20) (Desulfovibrio alaskensis).